The chain runs to 387 residues: Phosphoglycerate kinase (387 aa).

Residues 21 to 23 (DLN), Arg-36, 59 to 62 (HLGR), Arg-113, and Arg-146 contribute to the substrate site. ATP is bound by residues Lys-197, Glu-314, and 340-343 (GGDT).

Belongs to the phosphoglycerate kinase family. Monomer.

Its subcellular location is the cytoplasm. The catalysed reaction is (2R)-3-phosphoglycerate + ATP = (2R)-3-phospho-glyceroyl phosphate + ADP. The protein operates within carbohydrate degradation; glycolysis; pyruvate from D-glyceraldehyde 3-phosphate: step 2/5. This Pseudomonas putida (strain GB-1) protein is Phosphoglycerate kinase.